The chain runs to 421 residues: Exopolysaccharide production protein ExoF (421 aa).

An N-terminal signal peptide occupies residues 1 to 31; sequence MQSNRRSGKSAGSRMVSCFTRLALLAALAAS.

Its subcellular location is the periplasm. The protein operates within glycan metabolism; exopolysaccharide biosynthesis. Involved in succinoglycan (EPS I) synthesis. Needed for the addition of the first sugar (galactose) to the isoprenoid carrier. The polypeptide is Exopolysaccharide production protein ExoF (exoF) (Rhizobium meliloti (strain 1021) (Ensifer meliloti)).